A 1520-amino-acid polypeptide reads, in one-letter code: Putative lipoprotein AcfD homolog (1520 aa).

A signal peptide spans 1-23; that stretch reads MNKKFKYKKSLLAAILSATLLAG. 2 disordered regions span residues 22-107 and 226-247; these read AGCD…GATC and NAATDKAPSTHTSPVVPVTTPG. Residue Cys24 is the site of N-palmitoyl cysteine attachment. Residue Cys24 is the site of S-diacylglycerol cysteine attachment. Residues 31–42 show a composition bias toward low complexity; sequence SSSDTPPVDSGT. The segment covering 51-77 has biased composition (pro residues); sequence DPTPNPEPTPEPTPDPEPTPEPIPDPE. Positions 97–107 are enriched in polar residues; it reads GGSQRVTGATC. Residues 234-247 show a composition bias toward low complexity; that stretch reads STHTSPVVPVTTPG. Residues 1081–1381 form the Peptidase M60 domain; the sequence is GNMQSTGLWA…MYAQLKEWAE (301 aa). The interval 1498-1520 is disordered; it reads DLPKPEQGPETINQVTEHKMSAE.

The protein to V.cholerae AcfD (VC_0845).

It localises to the cell inner membrane. Its function is as follows. Involved in a type II secretion system (T2SS, formerly general secretion pathway, GSP) for the export of folded proteins across the outer membrane. This chain is Putative lipoprotein AcfD homolog (yghJ), found in Escherichia coli (strain K12).